A 71-amino-acid polypeptide reads, in one-letter code: Small ribosomal subunit protein bS18 (71 aa).

Belongs to the bacterial ribosomal protein bS18 family. In terms of assembly, part of the 30S ribosomal subunit. Forms a tight heterodimer with protein bS6.

Its function is as follows. Binds as a heterodimer with protein bS6 to the central domain of the 16S rRNA, where it helps stabilize the platform of the 30S subunit. The polypeptide is Small ribosomal subunit protein bS18 (Thermosynechococcus vestitus (strain NIES-2133 / IAM M-273 / BP-1)).